A 120-amino-acid chain; its full sequence is uncharacterized protein (120 aa).

This is an uncharacterized protein from Methanocaldococcus jannaschii (strain ATCC 43067 / DSM 2661 / JAL-1 / JCM 10045 / NBRC 100440) (Methanococcus jannaschii).